The chain runs to 96 residues: Large ribosomal subunit protein bL28 (96 aa).

Belongs to the bacterial ribosomal protein bL28 family.

The chain is Large ribosomal subunit protein bL28 from Leptospira biflexa serovar Patoc (strain Patoc 1 / Ames).